Here is a 158-residue protein sequence, read N- to C-terminus: UPF0225 protein Pput_1155 (158 aa).

Belongs to the UPF0225 family.

The chain is UPF0225 protein Pput_1155 from Pseudomonas putida (strain ATCC 700007 / DSM 6899 / JCM 31910 / BCRC 17059 / LMG 24140 / F1).